Here is a 184-residue protein sequence, read N- to C-terminus: Large ribosomal subunit protein bL17 (184 aa).

The interval 126–184 (TRAARAAASKQTADEAQVEETPAEEVTEETAAEETTEAAQADEAPAEEAPVEEKKDEEK) is disordered. Residues 141 to 161 (AQVEETPAEEVTEETAAEETT) are compositionally biased toward acidic residues.

The protein belongs to the bacterial ribosomal protein bL17 family. In terms of assembly, part of the 50S ribosomal subunit. Contacts protein L32.

The polypeptide is Large ribosomal subunit protein bL17 (Corynebacterium efficiens (strain DSM 44549 / YS-314 / AJ 12310 / JCM 11189 / NBRC 100395)).